An 823-amino-acid polypeptide reads, in one-letter code: ATP-dependent RNA helicase HrpA (823 aa).

In terms of domain architecture, Helicase ATP-binding spans 16–179 (IKVLKNHNVL…FNNAPVVSIE (164 aa)). 29-36 (SPTGSGKT) is an ATP binding site. The short motif at 126–129 (DEAH) is the DEAH box element. One can recognise a Helicase C-terminal domain in the interval 203–374 (KIKEIVLNVI…EVVLRMADIG (172 aa)).

The protein belongs to the DEAD box helicase family. DEAH subfamily.

It catalyses the reaction ATP + H2O = ADP + phosphate + H(+). Functionally, has RNA-stimulated ATPase activity and RNA helicase activity. Involved in global regulation of gene expression. Could be involved in RNA processing and post-transcriptional gene regulation. Essential for both tick transmission and mouse infection. The chain is ATP-dependent RNA helicase HrpA from Borreliella burgdorferi (strain ATCC 35210 / DSM 4680 / CIP 102532 / B31) (Borrelia burgdorferi).